We begin with the raw amino-acid sequence, 777 residues long: Rho guanine nucleotide exchange factor 38 (777 aa).

Position 34 is a phosphothreonine (Thr34). Residues 35–72 (DTVVESSVSGDHSGTLRRSQSDRTEYNQKLQEKMTPQG) form a disordered region. Over residues 37–52 (VVESSVSGDHSGTLRR) the composition is skewed to polar residues. Residues 53–66 (SQSDRTEYNQKLQE) show a composition bias toward basic and acidic residues. The DH domain maps to 94–285 (KREKIIKELI…KDINVNINEL (192 aa)). The BAR domain occupies 327–536 (LKILTRGESQ…QNQVLEEIQN (210 aa)). In terms of domain architecture, SH3 1 spans 582 to 645 (SAEELYQAKR…YSSFLKPYNP (64 aa)). The segment at 673-694 (PASDSVTGTSESSIGDSSSSLS) is disordered. Low complexity predominate over residues 679 to 694 (TGTSESSIGDSSSSLS). Residues 713-776 (VDEQIFYAVH…PANYLGKMTY (64 aa)) form the SH3 2 domain.

May act as a guanine-nucleotide releasing factor. The protein is Rho guanine nucleotide exchange factor 38 (ARHGEF38) of Homo sapiens (Human).